Consider the following 553-residue polypeptide: Efflux pump alnA (553 aa).

A compositionally biased stretch (basic and acidic residues) spans 1–21 (MSSDDTVKQEHSCSADSEKQD). The tract at residues 1-36 (MSSDDTVKQEHSCSADSEKQDSSCASDNEQPKEPQS) is disordered. Transmembrane regions (helical) follow at residues 40 to 60 (IHGLLWVVTILAIYSSTFLFA), 85 to 105 (WSGVAFVMASSATVLTWLQIF), 110 to 130 (IKWMYIFSIAVFMGGSAICGA), 136 to 156 (MLIGGRVICGIGGVGQYVGVM), 174 to 194 (AMGLTWGAGTVLGPIIGGAFT), 202 to 222 (WSFYINLVVGGLFAPVYIFLL), 243 to 263 (LVGTLILFAAFAAGVIGINFA), 270 to 290 (SEPGIIVAITLGGVLFIVFGI), 319 to 339 (LLFVCGCCTGVCVTVPTYVIP), 355 to 375 (VRLLPFVCLLVFSCVSGGYLA), 382 to 402 (IPWYIMGGGFCLIGSALMYTI), 413 to 433 (GYSSLIGLGSGMYLQLGHAVA), and 522 to 542 (TYILCIVAAAVTLLATLGMKW).

The protein belongs to the major facilitator superfamily. TCR/Tet family.

It is found in the cell membrane. Functionally, efflux pump; part of the gene cluster that mediates the biosynthesis of asperlin, a polyketide showing anti-inflammatory, antitumor and antibiotic activities. Is probably involved in the efflux of asperlin. In Emericella nidulans (strain FGSC A4 / ATCC 38163 / CBS 112.46 / NRRL 194 / M139) (Aspergillus nidulans), this protein is Efflux pump alnA.